A 104-amino-acid polypeptide reads, in one-letter code: Glutaredoxin 1 (104 aa).

The 96-residue stretch at Met1–Lys96 folds into the Glutaredoxin domain. A disulfide bridge connects residues Cys17 and Cys20.

This sequence belongs to the glutaredoxin family. As to quaternary structure, monomer.

Its subcellular location is the cytoplasm. In terms of biological role, has a glutathione-disulfide oxidoreductase activity in the presence of NADPH and glutathione reductase. Reduces low molecular weight disulfides and proteins. The protein is Glutaredoxin 1 (grxC1) of Rickettsia typhi (strain ATCC VR-144 / Wilmington).